The primary structure comprises 317 residues: Gamma-glutamyl hydrolase (317 aa).

The first 24 residues, 1–24, serve as a signal peptide directing secretion; sequence MASLGRLLCAWVLLLCGLASPGLS. The Gamma-glutamyl hydrolase domain occupies 25-317; it reads GSYERGSKRP…SSFQQAYMFN (293 aa). 2 N-linked (GlcNAc...) asparagine glycosylation sites follow: Asn-46 and Asn-100. Catalysis depends on Cys-133, which acts as the Nucleophile. Asn-153, Asn-162, Asn-188, and Asn-202 each carry an N-linked (GlcNAc...) asparagine glycan. His-243 (proton donor) is an active-site residue. A glycan (N-linked (GlcNAc...) asparagine) is linked at Asn-306.

It belongs to the peptidase C26 family. In terms of assembly, homodimer.

The protein localises to the secreted. The protein resides in the extracellular space. Its subcellular location is the lysosome. It is found in the melanosome. The enzyme catalyses (6S)-5,6,7,8-tetrahydrofolyl-(gamma-L-Glu)(n) + (n-1) H2O = (6S)-5,6,7,8-tetrahydrofolate + (n-1) L-glutamate. Its activity is regulated as follows. Activity is altered by insulin and estrogen. Hydrolyzes the polyglutamate sidechains of pteroylpolyglutamates. Progressively removes gamma-glutamyl residues from pteroylpoly-gamma-glutamate to yield pteroyl-alpha-glutamate (folic acid) and free glutamate. May play an important role in the bioavailability of dietary pteroylpolyglutamates and in the metabolism of pteroylpolyglutamates and antifolates. Exhibits either endo- or exopeptidase activity depending upon the tissue of origin. When secreted, it acts primarily as an endopeptidase. This Rattus norvegicus (Rat) protein is Gamma-glutamyl hydrolase (Ggh).